Consider the following 326-residue polypeptide: Tryptophan--tRNA ligase (326 aa).

ATP-binding positions include 11–13 (QPT) and 19–20 (GN). Positions 12 to 20 (PTGQIHLGN) match the 'HIGH' region motif. L-tryptophan is bound at residue Asp-135. Residues 147–149 (GED), Val-186, and 195–199 (KMSKS) contribute to the ATP site. Positions 195–199 (KMSKS) match the 'KMSKS' region motif.

Belongs to the class-I aminoacyl-tRNA synthetase family. In terms of assembly, homodimer.

The protein resides in the cytoplasm. It carries out the reaction tRNA(Trp) + L-tryptophan + ATP = L-tryptophyl-tRNA(Trp) + AMP + diphosphate + H(+). Its function is as follows. Catalyzes the attachment of tryptophan to tRNA(Trp). The sequence is that of Tryptophan--tRNA ligase from Helicobacter pylori (strain J99 / ATCC 700824) (Campylobacter pylori J99).